We begin with the raw amino-acid sequence, 226 residues long: 26S proteasome non-ATPase regulatory subunit 10 (226 aa).

The required for nuclear localization stretch occupies residues 1-37 (MEGCVSNLMVCNLAYSGKLEELKESILADKSLATRTD). The interval 1-71 (MEGCVSNLMV…LGVPVNDKDD (71 aa)) is interaction with RB1. 7 ANK repeats span residues 3 to 36 (GCVS…ATRT), 37 to 69 (DQDS…VNDK), 70 to 102 (DDAG…VNAV), 103 to 135 (NQNG…PDAK), 136 to 168 (DHYE…TNIQ), 169 to 201 (DTEG…IYIE), and 202 to 226 (NKEE…MVEG). An interaction with RELA region spans residues 39–226 (DSRTALHWAC…GLILKRMVEG (188 aa)). Residues 171-226 (EGNTPLHLACDEERVEEAKLLVSQGASIYIENKEEKTPLQVAKGGLGLILKRMVEG) form an interaction with RB1 region.

In terms of assembly, part of transient complex containing PSMD10, PSMC4, PSMC5 and PAAF1 formed during the assembly of the 26S proteasome. Stays associated throughout the assembly of the PA700/19S RC and is released upon association with the 20S core. Interacts with PSMC4. Interacts with RB1. Interacts with CDK4. Interacts with MDM2. Interacts with RELA. Associates with a CDK4:CCND2 serine/threonine kinase complex. Interacts with ARHGDIA and increases the interaction between ARHGDIA and RHOA, hence promotes ARHGDIA inactivation of RHOA and ROCK. As to expression, tends to be up-regulated in cancer cells with RAS mutations, including lung cancers and adenocarconimas (at protein level).

Its subcellular location is the cytoplasm. It localises to the nucleus. Its function is as follows. Acts as a chaperone during the assembly of the 26S proteasome, specifically of the PA700/19S regulatory complex (RC). In the initial step of the base subcomplex assembly is part of an intermediate PSMD10:PSMC4:PSMC5:PAAF1 module which probably assembles with a PSMD5:PSMC2:PSMC1:PSMD2 module. Independently of the proteasome, regulates EGF-induced AKT activation through inhibition of the RHOA/ROCK/PTEN pathway, leading to prolonged AKT activation. Plays an important role in RAS-induced tumorigenesis. Functionally, acts as an proto-oncoprotein by being involved in negative regulation of tumor suppressors RB1 and p53/TP53. Overexpression is leading to phosphorylation of RB1 and proteasomal degradation of RB1. Regulates CDK4-mediated phosphorylation of RB1 by competing with CDKN2A for binding with CDK4. Facilitates binding of MDM2 to p53/TP53 and the mono- and polyubiquitination of p53/TP53 by MDM2 suggesting a function in targeting the TP53:MDM2 complex to the 26S proteasome. Involved in p53-independent apoptosis. Involved in regulation of NF-kappa-B by retaining it in the cytoplasm. Binds to the NF-kappa-B component RELA and accelerates its XPO1/CRM1-mediated nuclear export. The protein is 26S proteasome non-ATPase regulatory subunit 10 (PSMD10) of Homo sapiens (Human).